We begin with the raw amino-acid sequence, 105 residues long: Small ribosomal subunit protein eS24 (105 aa).

Belongs to the eukaryotic ribosomal protein eS24 family.

The protein is Small ribosomal subunit protein eS24 of Ignicoccus hospitalis (strain KIN4/I / DSM 18386 / JCM 14125).